Reading from the N-terminus, the 315-residue chain is KH domain-containing protein At5g56140 (315 aa).

Disordered stretches follow at residues 1 to 53 (MMMM…GGLR) and 136 to 158 (SQFP…SPGS). Positions 7–28 (LGGGGGGGGGSGGGIGGGGGGR) are enriched in gly residues. Composition is skewed to polar residues over residues 31-53 (TYSS…GGLR) and 136-146 (SQFPSERSVPS). The KH domain occupies 171–238 (DIPVDNYPNF…EHLNEPLHIL (68 aa)). The tract at residues 289–315 (REEGSPMSGSVSPYNSLGMKRAKTREG) is disordered. At Ser-300 the chain carries Phosphoserine.

It is found in the nucleus. The chain is KH domain-containing protein At5g56140 from Arabidopsis thaliana (Mouse-ear cress).